Here is a 262-residue protein sequence, read N- to C-terminus: Short-chain reductase protein NovJ (262 aa).

NADP(+) contacts are provided by residues Gly23–Arg26 and Asp73–Val74. Ser152 serves as a coordination point for substrate. Tyr164 serves as the catalytic Proton acceptor. Tyr164–Lys168 provides a ligand contact to NADP(+).

Belongs to the short-chain dehydrogenases/reductases (SDR) family. In terms of assembly, heterotetramer; the NovJ(2)K(2) heterotetramer is composed of subunits of 2 NovJ and 2 subunits of NovK.

The protein operates within antibiotic biosynthesis; novobiocin biosynthesis. In terms of biological role, catalytic subunit of the NovJ(2)K(2) heterotetramer that catalyzes the NADPH-dependent reduction of the tyrosyl moiety of L-beta-OH-Tyr-S-NovH intermediate to yield the tethered beta-ketotyrosyl-S-NovH in the novobiocin biosynthesis pathway. Novobiocin is an aminocoumarin family antibiotic that targets bacterial DNA gyrases. In Streptomyces niveus (Streptomyces spheroides), this protein is Short-chain reductase protein NovJ (novJ).